A 397-amino-acid polypeptide reads, in one-letter code: Ubiquitin-like modifier-activating enzyme 5 (397 aa).

ATP contacts are provided by G76, D97, K120, N143, and N177. 2 residues coordinate Zn(2+): C219 and C222. Catalysis depends on C243, which acts as the Glycyl thioester intermediate. The Zn(2+) site is built by C296 and C301. The segment at 362–384 (LAYEPPASTKHSETTSTTAVSDD) is disordered. The span at 375–384 (TTSTTAVSDD) shows a compositional bias: low complexity.

Belongs to the ubiquitin-activating E1 family. UBA5 subfamily.

Functionally, E1-like enzyme which activates UFM1. The chain is Ubiquitin-like modifier-activating enzyme 5 from Aedes aegypti (Yellowfever mosquito).